Consider the following 326-residue polypeptide: tRNA U34 carboxymethyltransferase (326 aa).

Carboxy-S-adenosyl-L-methionine-binding positions include lysine 95, tryptophan 109, lysine 114, glycine 134, 184–185, tyrosine 204, and arginine 319; that span reads VE.

This sequence belongs to the class I-like SAM-binding methyltransferase superfamily. CmoB family.

It catalyses the reaction carboxy-S-adenosyl-L-methionine + 5-hydroxyuridine(34) in tRNA = 5-carboxymethoxyuridine(34) in tRNA + S-adenosyl-L-homocysteine + H(+). Its function is as follows. Catalyzes carboxymethyl transfer from carboxy-S-adenosyl-L-methionine (Cx-SAM) to 5-hydroxyuridine (ho5U) to form 5-carboxymethoxyuridine (cmo5U) at position 34 in tRNAs. In Trichodesmium erythraeum (strain IMS101), this protein is tRNA U34 carboxymethyltransferase.